Here is a 138-residue protein sequence, read N- to C-terminus: Acidic phospholipase A2 Cvv-E6b (138 aa).

An N-terminal signal peptide occupies residues 1-16 (MRTLWILAVLLLGVEG). 7 disulfides stabilise this stretch: Cys-42–Cys-131, Cys-44–Cys-60, Cys-59–Cys-111, Cys-65–Cys-138, Cys-66–Cys-104, Cys-73–Cys-97, and Cys-91–Cys-102. Tyr-43, Gly-45, and Gly-47 together coordinate Ca(2+). His-63 is an active-site residue. Asp-64 serves as a coordination point for Ca(2+). Asp-105 is a catalytic residue.

The cofactor is Ca(2+). In terms of tissue distribution, expressed by the venom gland.

The protein localises to the secreted. The catalysed reaction is a 1,2-diacyl-sn-glycero-3-phosphocholine + H2O = a 1-acyl-sn-glycero-3-phosphocholine + a fatty acid + H(+). Its function is as follows. Snake venom phospholipase A2 (PLA2) that shows very low inhibition of ADP-induced platelet aggregation in platelet-rich plasma of human, rabbit and guinea pig. PLA2 catalyzes the calcium-dependent hydrolysis of the 2-acyl groups in 3-sn-phosphoglycerides. The chain is Acidic phospholipase A2 Cvv-E6b from Crotalus viridis viridis (Prairie rattlesnake).